A 544-amino-acid polypeptide reads, in one-letter code: Elongator complex protein 3 (544 aa).

The Radical SAM core domain occupies 79–369; sequence RTASGIAVVA…YRIQRDIPMP (291 aa). Residues C96, C106, and C109 each coordinate [4Fe-4S] cluster. Residues K161, 472–475, 495–497, and Y528 each bind acetyl-CoA; these read ELHV and FGT. An N-acetyltransferase domain is found at 393-544; it reads TKCRDIRARE…LDGPYMSKWL (152 aa).

It belongs to the ELP3 family. As to quaternary structure, component of the elongator complex. [4Fe-4S] cluster is required as a cofactor.

Its subcellular location is the cytoplasm. The catalysed reaction is uridine(34) in tRNA + acetyl-CoA + S-adenosyl-L-methionine + H2O = 5-(carboxymethyl)uridine(34) in tRNA + 5'-deoxyadenosine + L-methionine + CoA + 2 H(+). It functions in the pathway tRNA modification; 5-methoxycarbonylmethyl-2-thiouridine-tRNA biosynthesis. Its function is as follows. Catalytic tRNA acetyltransferase subunit of the elongator complex which is required for multiple tRNA modifications, including mcm5U (5-methoxycarbonylmethyl uridine), mcm5s2U (5-methoxycarbonylmethyl-2-thiouridine), and ncm5U (5-carbamoylmethyl uridine). In the elongator complex, acts as a tRNA uridine(34) acetyltransferase, which mediates formation of carboxymethyluridine in the wobble base at position 34 in tRNAs. In Schizosaccharomyces pombe (strain 972 / ATCC 24843) (Fission yeast), this protein is Elongator complex protein 3.